A 598-amino-acid chain; its full sequence is Elongation factor 4 (598 aa).

Residues 4–185 (KNIRNFSIIA…TIIAKIPPPK (182 aa)) form the tr-type G domain. Residues 16–21 (DHGKST) and 132–135 (NKID) each bind GTP.

Belongs to the TRAFAC class translation factor GTPase superfamily. Classic translation factor GTPase family. LepA subfamily.

It is found in the cell membrane. The enzyme catalyses GTP + H2O = GDP + phosphate + H(+). Required for accurate and efficient protein synthesis under certain stress conditions. May act as a fidelity factor of the translation reaction, by catalyzing a one-codon backward translocation of tRNAs on improperly translocated ribosomes. Back-translocation proceeds from a post-translocation (POST) complex to a pre-translocation (PRE) complex, thus giving elongation factor G a second chance to translocate the tRNAs correctly. Binds to ribosomes in a GTP-dependent manner. In Mycoplasma genitalium (strain ATCC 33530 / DSM 19775 / NCTC 10195 / G37) (Mycoplasmoides genitalium), this protein is Elongation factor 4.